The chain runs to 191 residues: Rho-related GTP-binding protein RhoH (191 aa).

Position 11 to 18 (11 to 18 (GDSAVGKT)) interacts with GTP. The short motif at 33 to 41 (YKPTVYENT) is the Effector region element. 58 to 62 (DTAGN) serves as a coordination point for GTP. The interval 73-86 (YQQADVVLMCYSVA) is interaction with ZAP70. A GTP-binding site is contributed by 116–119 (TQTD). The residue at position 188 (C188) is a Cysteine methyl ester. C188 carries the S-geranylgeranyl cysteine lipid modification. Residues 189–191 (KIL) constitute a propeptide, removed in mature form.

It belongs to the small GTPase superfamily. Rho family. Interacts with GDI1 and GDI2. Interacts with ZAP70 (via SH2 domains) and the interaction is enhanced by its phosphorylation by LCK. Interacts with SYK and the interaction is enhanced by its phosphorylation by FYN. Phosphorylated on tyrosine by LCK. Phosphorylated by FYN. Phosphorylation enhances the interactions with ZAP70 and SYK and is critical for its function in thymocyte development.

It is found in the cytoplasm. It localises to the cell membrane. Functionally, binds GTP but lacks intrinsic GTPase activity and is resistant to Rho-specific GTPase-activating proteins. Inhibits the activation of NF-kappa-B by TNF and IKKB and the activation of CRK/p38 by TNF. Inhibits activities of RAC1, RHOA and CDC42. Negatively regulates leukotriene production in neutrophils. Negative regulator of hematopoietic progenitor cell proliferation, survival and migration. Critical regulator of thymocyte development and T-cell antigen receptor (TCR) signaling by mediating recruitment and activation of ZAP70. Required for phosphorylation of CD3Z, membrane translocation of ZAP70 and subsequent activation of the ZAP70-mediated pathways. Essential for efficient beta-selection and positive selection by promoting the ZAP70-dependent phosphorylation of the LAT signalosome during pre-TCR and TCR signaling. Crucial for thymocyte maturation during DN3 to DN4 transition and during positive selection. Plays critical roles in mast cell function by facilitating phosphorylation of SYK in Fc epsilon RI-mediated signal transduction. Essential for the phosphorylation of LAT, LCP2, PLCG1 and PLCG2 and for Ca(2+) mobilization in mast cells. In Bos taurus (Bovine), this protein is Rho-related GTP-binding protein RhoH (RHOH).